A 146-amino-acid chain; its full sequence is Heat-stable 19 kDa antigen (146 aa).

Residues 1 to 20 (MKFSLLSAIAAAVFVPFTSA) form the signal peptide.

The protein belongs to the cerato-platanin family. Post-translationally, glycosylated.

Its subcellular location is the secreted. This chain is Heat-stable 19 kDa antigen (CSA), found in Coccidioides posadasii (strain C735) (Valley fever fungus).